The following is a 446-amino-acid chain: Bifunctional protein GlmU (446 aa).

The pyrophosphorylase stretch occupies residues 1 to 226 (MLAVAILAAG…PDEVNGINDR (226 aa)). UDP-N-acetyl-alpha-D-glucosamine is bound by residues 7-10 (LAAG), Lys21, Gln73, and 78-79 (GT). Asp103 is a binding site for Mg(2+). UDP-N-acetyl-alpha-D-glucosamine is bound by residues Gly140, Glu155, Asn170, and Asn224. Asn224 lines the Mg(2+) pocket. A linker region spans residues 227-247 (CQLANCEALLQERLRNYWMKE). Residues 248 to 446 (GVTFTDPASC…SKQLIKNGWQ (199 aa)) form an N-acetyltransferase region. Residues Arg329 and Lys347 each contribute to the UDP-N-acetyl-alpha-D-glucosamine site. The Proton acceptor role is filled by His359. 2 residues coordinate UDP-N-acetyl-alpha-D-glucosamine: Tyr362 and Asn373. Acetyl-CoA is bound by residues Ala376, 382 to 383 (NY), Ala419, and Arg436.

It in the N-terminal section; belongs to the N-acetylglucosamine-1-phosphate uridyltransferase family. The protein in the C-terminal section; belongs to the transferase hexapeptide repeat family. In terms of assembly, homotrimer. The cofactor is Mg(2+).

The protein resides in the cytoplasm. The catalysed reaction is alpha-D-glucosamine 1-phosphate + acetyl-CoA = N-acetyl-alpha-D-glucosamine 1-phosphate + CoA + H(+). It carries out the reaction N-acetyl-alpha-D-glucosamine 1-phosphate + UTP + H(+) = UDP-N-acetyl-alpha-D-glucosamine + diphosphate. It functions in the pathway nucleotide-sugar biosynthesis; UDP-N-acetyl-alpha-D-glucosamine biosynthesis; N-acetyl-alpha-D-glucosamine 1-phosphate from alpha-D-glucosamine 6-phosphate (route II): step 2/2. It participates in nucleotide-sugar biosynthesis; UDP-N-acetyl-alpha-D-glucosamine biosynthesis; UDP-N-acetyl-alpha-D-glucosamine from N-acetyl-alpha-D-glucosamine 1-phosphate: step 1/1. Its pathway is bacterial outer membrane biogenesis; LPS lipid A biosynthesis. Functionally, catalyzes the last two sequential reactions in the de novo biosynthetic pathway for UDP-N-acetylglucosamine (UDP-GlcNAc). The C-terminal domain catalyzes the transfer of acetyl group from acetyl coenzyme A to glucosamine-1-phosphate (GlcN-1-P) to produce N-acetylglucosamine-1-phosphate (GlcNAc-1-P), which is converted into UDP-GlcNAc by the transfer of uridine 5-monophosphate (from uridine 5-triphosphate), a reaction catalyzed by the N-terminal domain. The polypeptide is Bifunctional protein GlmU (Prochlorococcus marinus (strain MIT 9313)).